A 381-amino-acid chain; its full sequence is cAMP-dependent protein kinase type I-alpha regulatory subunit (381 aa).

Position 1 is an N-acetylmethionine (M1). Residue A2 is modified to N-acetylalanine; in cAMP-dependent protein kinase type I-alpha regulatory subunit, N-terminally processed. The tract at residues 2–136 (ASGSMATSEE…ALAKAIEKNV (135 aa)) is dimerization and phosphorylation. Phosphoserine is present on S3. Residues 73 to 96 (IRTDSREDEISPPPPNPVVKGRRR) form a disordered region. The residue at position 75 (T75) is a Phosphothreonine. A phosphoserine mark is found at S77 and S83. Residues 96–100 (RRGAI) carry the Pseudophosphorylation motif motif. S101 bears the Phosphoserine mark. 3',5'-cyclic AMP contacts are provided by residues 137-254 (LFSH…SKVS), E202, R211, 255-381 (ILES…SLSV), E326, and R335. Residue S258 is modified to Phosphoserine.

Belongs to the cAMP-dependent kinase regulatory chain family. In terms of assembly, the inactive holoenzyme is composed of two regulatory chains and two catalytic chains. Activation by cAMP releases the two active catalytic monomers and the regulatory dimer. Interacts with PRKACA and PRKACB. PRKAR1A also interacts with RFC2; the complex may be involved in cell survival. Interacts with AKAP4. Interacts with RARA; the interaction occurs in the presence of cAMP or FSH and regulates RARA transcriptional activity. Interacts with the phosphorylated form of PJA2. Interacts with PRKX; regulates this cAMP-dependent protein kinase. Interacts with CBFA2T3. Interacts with smAKAP; this interaction may target PRKAR1A to the plasma membrane. Interacts with AICDA. In terms of processing, the pseudophosphorylation site binds to the substrate-binding region of the catalytic chain, resulting in the inhibition of its activity.

The protein resides in the cell membrane. In terms of biological role, regulatory subunit of the cAMP-dependent protein kinases involved in cAMP signaling in cells. The polypeptide is cAMP-dependent protein kinase type I-alpha regulatory subunit (Prkar1a) (Mus musculus (Mouse)).